Here is a 194-residue protein sequence, read N- to C-terminus: Clathrin light chain (194 aa).

Residues 44–156 (TTFDNSNNNN…TDSTSGNTTH (113 aa)) form a disordered region. Over residues 48 to 65 (NSNNNNNNNNHNNNSYNS) the composition is skewed to low complexity. 2 stretches are compositionally biased toward basic and acidic residues: residues 89-115 (EYLEKHEKEMQEKKKKSEEKRQKKIAE) and 124-146 (YSEREAKKKTALKNNRDHNKSLE). Residues 124–194 (YSEREAKKKT…LIRLKNQPIV (71 aa)) form a required for binding clathrin heavy chain, localization to punctae, and for cytokinesis and fruiting body development region. Residues 147-156 (TDSTSGNTTH) show a composition bias toward polar residues.

The protein belongs to the clathrin light chain family. Clathrin coats are formed from molecules containing 3 heavy chains and 3 light chains.

It is found in the cytoplasmic vesicle membrane. The protein resides in the membrane. Its subcellular location is the coated pit. Functionally, clathrin is the major protein of the polyhedral coat of coated pits and vesicles. This chain is Clathrin light chain (clc), found in Dictyostelium discoideum (Social amoeba).